The chain runs to 1068 residues: Carbamoyl phosphate synthase large chain (1068 aa).

Residues M1 to E401 form a carboxyphosphate synthetic domain region. The ATP site is built by R129, R169, G175, G176, K208, V210, E215, G241, I242, H243, Q284, and E298. Residues R133–L327 enclose the ATP-grasp 1 domain. Mg(2+)-binding residues include Q284, E298, and N300. Residues Q284, E298, and N300 each coordinate Mn(2+). Positions I402–V549 are oligomerization domain. The interval E550 to N932 is carbamoyl phosphate synthetic domain. The region spanning D674–L864 is the ATP-grasp 2 domain. ATP contacts are provided by R710, K749, L751, E755, G780, V781, H782, S783, Q823, and E835. Positions 823, 835, and 837 each coordinate Mg(2+). Positions 823, 835, and 837 each coordinate Mn(2+). In terms of domain architecture, MGS-like spans I933–N1068. Residues I933–N1068 are allosteric domain.

Belongs to the CarB family. In terms of assembly, composed of two chains; the small (or glutamine) chain promotes the hydrolysis of glutamine to ammonia, which is used by the large (or ammonia) chain to synthesize carbamoyl phosphate. Tetramer of heterodimers (alpha,beta)4. Mg(2+) serves as cofactor. Mn(2+) is required as a cofactor.

It catalyses the reaction hydrogencarbonate + L-glutamine + 2 ATP + H2O = carbamoyl phosphate + L-glutamate + 2 ADP + phosphate + 2 H(+). The enzyme catalyses hydrogencarbonate + NH4(+) + 2 ATP = carbamoyl phosphate + 2 ADP + phosphate + 2 H(+). It functions in the pathway amino-acid biosynthesis; L-arginine biosynthesis; carbamoyl phosphate from bicarbonate: step 1/1. Its pathway is pyrimidine metabolism; UMP biosynthesis via de novo pathway; (S)-dihydroorotate from bicarbonate: step 1/3. Functionally, large subunit of the glutamine-dependent carbamoyl phosphate synthetase (CPSase). CPSase catalyzes the formation of carbamoyl phosphate from the ammonia moiety of glutamine, carbonate, and phosphate donated by ATP, constituting the first step of 2 biosynthetic pathways, one leading to arginine and/or urea and the other to pyrimidine nucleotides. The large subunit (synthetase) binds the substrates ammonia (free or transferred from glutamine from the small subunit), hydrogencarbonate and ATP and carries out an ATP-coupled ligase reaction, activating hydrogencarbonate by forming carboxy phosphate which reacts with ammonia to form carbamoyl phosphate. The protein is Carbamoyl phosphate synthase large chain of Clostridium botulinum (strain Langeland / NCTC 10281 / Type F).